Reading from the N-terminus, the 462-residue chain is GTPase Der (462 aa).

EngA-type G domains lie at 9–171 and 201–372; these read KTIA…NLNQ and IQVG…ECFS. GTP contacts are provided by residues 15-22, 62-66, 123-126, 207-214, 254-258, and 318-321; these read GQPNVGKS, DTGGM, NKID, GRVNVGKS, DTAGI, and NKWD. In terms of domain architecture, KH-like spans 373–457; it reads KRIPTSLLNS…PLILNAKDKK (85 aa).

This sequence belongs to the TRAFAC class TrmE-Era-EngA-EngB-Septin-like GTPase superfamily. EngA (Der) GTPase family. Associates with the 50S ribosomal subunit.

Its function is as follows. GTPase that plays an essential role in the late steps of ribosome biogenesis. The polypeptide is GTPase Der (Helicobacter pylori (strain P12)).